The following is a 77-amino-acid chain: Sec-independent protein translocase protein TatA (77 aa).

The chain crosses the membrane as a helical span at residues 1–21; that stretch reads MGSFSIWHWLVVLAIVVLVFG. The segment at 40-77 is disordered; sequence KEGMKGAEEENTQPPPSHQQVTGHSIKSEIEEKDQTKV. Basic and acidic residues predominate over residues 65–77; the sequence is IKSEIEEKDQTKV.

Belongs to the TatA/E family. As to quaternary structure, the Tat system comprises two distinct complexes: a TatABC complex, containing multiple copies of TatA, TatB and TatC subunits, and a separate TatA complex, containing only TatA subunits. Substrates initially bind to the TatABC complex, which probably triggers association of the separate TatA complex to form the active translocon.

It is found in the cell inner membrane. Part of the twin-arginine translocation (Tat) system that transports large folded proteins containing a characteristic twin-arginine motif in their signal peptide across membranes. TatA could form the protein-conducting channel of the Tat system. The polypeptide is Sec-independent protein translocase protein TatA (Nitrosomonas eutropha (strain DSM 101675 / C91 / Nm57)).